The chain runs to 167 residues: Endothelin-3 (167 aa).

The N-terminal stretch at 1 to 19 is a signal peptide; sequence MELGLWLLLGLTVTSAAAA. Positions 20-50 are excised as a propeptide; sequence LPAQPGNAGQERGPGRSGDQEEKRVPAHHRP. The tract at residues 22-45 is disordered; sequence AQPGNAGQERGPGRSGDQEEKRVP. 2 disulfides stabilise this stretch: cysteine 53-cysteine 67 and cysteine 55-cysteine 63. Residues 74–167 constitute a propeptide that is removed on maturation; sequence INTPEQTVPY…KSRTDKVHQP (94 aa). A disordered region spans residues 85–112; it reads LSNHRGSLRGKRSSGPVPESSQSSPQTR. Positions 97–109 are enriched in low complexity; it reads SSGPVPESSQSSP. The tract at residues 115–135 is endothelin-like; the sequence is CACSGVDDKACAYFCAHVTSY. Residues 140 to 149 show a composition bias toward basic and acidic residues; sequence EKAAAEEKQE. Positions 140–167 are disordered; it reads EKAAAEEKQETGGPRQRLKSRTDKVHQP.

It belongs to the endothelin/sarafotoxin family.

Its subcellular location is the secreted. In terms of biological role, endothelins are endothelium-derived vasoconstrictor peptides. The sequence is that of Endothelin-3 (Edn3) from Rattus norvegicus (Rat).